The sequence spans 205 residues: Golgi apparatus membrane protein TVP23 homolog B (205 aa).

Residue Met1 is modified to N-acetylmethionine. The segment at Met1–Glu21 is disordered. Helical transmembrane passes span Pro34–Leu53, Cys54–Leu72, Ile126–Leu146, and Lys152–Ile172.

It belongs to the TVP23 family.

It is found in the membrane. This chain is Golgi apparatus membrane protein TVP23 homolog B (TVP23B), found in Pongo abelii (Sumatran orangutan).